The primary structure comprises 264 residues: Cercarial protease (264 aa).

Positions 1–19 are cleaved as a signal peptide; the sequence is MSNRWRFVVVVTLFTYCLT. A propeptide spanning residues 20–27 is cleaved from the precursor; the sequence is FERVSTWL. The Peptidase S1 domain maps to 28-264; it reads IRSGEPVQHP…RMLDFVRSNI (237 aa). A disulfide bridge links cysteine 53 with cysteine 69. Catalysis depends on charge relay system residues histidine 68 and aspartate 126. A disulfide bond links cysteine 192 and cysteine 202. The active-site Charge relay system is the serine 218.

The protein belongs to the peptidase S1 family. In terms of tissue distribution, acetabular (penetration) glands.

Activated by an autocatalytic mechanism. Functionally, this protease cleaves elastin and thus facilitates penetration of schistosome parasite larvae through elastin-rich tissue of the host. This Schistosoma mansoni (Blood fluke) protein is Cercarial protease.